Here is a 313-residue protein sequence, read N- to C-terminus: Cytosolic Fe-S cluster assembly factor NUBP1 homolog (313 aa).

Residues 1 to 25 form a disordered region; the sequence is MSDVPDDANAGCPGTGSAGAGKASG. The [4Fe-4S] cluster site is built by C12, C26, C29, and C35. Position 66 to 73 (66 to 73) interacts with ATP; it reads GKGGVGKS. [4Fe-4S] cluster contacts are provided by C240 and C243.

The protein belongs to the Mrp/NBP35 ATP-binding proteins family. NUBP1/NBP35 subfamily. In terms of assembly, heterotetramer of 2 NUBP1 and 2 NUBP2 chains. Requires [4Fe-4S] cluster as cofactor. As to expression, expressed in head amphid and labial ciliated sensory neurons and tail phasmid ciliated chemosensory neurons.

The protein localises to the cytoplasm. Its subcellular location is the cell projection. Component of the cytosolic iron-sulfur (Fe/S) protein assembly (CIA) machinery. Required for maturation of extramitochondrial Fe-S proteins. The NUBP1-NUBP2 heterotetramer forms a Fe-S scaffold complex, mediating the de novo assembly of an Fe-S cluster and its transfer to target apoproteins. Regulates cilium formation and structure. The polypeptide is Cytosolic Fe-S cluster assembly factor NUBP1 homolog (Caenorhabditis elegans).